A 406-amino-acid chain; its full sequence is Arginine deiminase (406 aa).

Residue cysteine 396 is the Amidino-cysteine intermediate of the active site.

The protein belongs to the arginine deiminase family.

The protein localises to the cytoplasm. The catalysed reaction is L-arginine + H2O = L-citrulline + NH4(+). It functions in the pathway amino-acid degradation; L-arginine degradation via ADI pathway; carbamoyl phosphate from L-arginine: step 1/2. This chain is Arginine deiminase, found in Aliivibrio fischeri (strain MJ11) (Vibrio fischeri).